The chain runs to 246 residues: Probable hydroxyethylthiazole kinase (246 aa).

Residue Met50 participates in substrate binding. Residues Arg125 and Thr145 each contribute to the ATP site. Gly172 provides a ligand contact to substrate.

The protein belongs to the Thz kinase family. It depends on Mg(2+) as a cofactor.

The catalysed reaction is 5-(2-hydroxyethyl)-4-methylthiazole + ATP = 4-methyl-5-(2-phosphooxyethyl)-thiazole + ADP + H(+). It functions in the pathway cofactor biosynthesis; thiamine diphosphate biosynthesis; 4-methyl-5-(2-phosphoethyl)-thiazole from 5-(2-hydroxyethyl)-4-methylthiazole: step 1/1. Catalyzes the phosphorylation of the hydroxyl group of 4-methyl-5-beta-hydroxyethylthiazole (THZ). This is Probable hydroxyethylthiazole kinase (thiM) from Agrobacterium fabrum (strain C58 / ATCC 33970) (Agrobacterium tumefaciens (strain C58)).